The primary structure comprises 578 residues: Proline--tRNA ligase (578 aa).

It belongs to the class-II aminoacyl-tRNA synthetase family. ProS type 1 subfamily. In terms of assembly, homodimer.

Its subcellular location is the cytoplasm. The catalysed reaction is tRNA(Pro) + L-proline + ATP = L-prolyl-tRNA(Pro) + AMP + diphosphate. In terms of biological role, catalyzes the attachment of proline to tRNA(Pro) in a two-step reaction: proline is first activated by ATP to form Pro-AMP and then transferred to the acceptor end of tRNA(Pro). As ProRS can inadvertently accommodate and process non-cognate amino acids such as alanine and cysteine, to avoid such errors it has two additional distinct editing activities against alanine. One activity is designated as 'pretransfer' editing and involves the tRNA(Pro)-independent hydrolysis of activated Ala-AMP. The other activity is designated 'posttransfer' editing and involves deacylation of mischarged Ala-tRNA(Pro). The misacylated Cys-tRNA(Pro) is not edited by ProRS. This is Proline--tRNA ligase from Burkholderia thailandensis (strain ATCC 700388 / DSM 13276 / CCUG 48851 / CIP 106301 / E264).